The following is a 138-amino-acid chain: Large ribosomal subunit protein uL16 (138 aa).

A compositionally biased stretch (basic residues) spans 1–15 (MLSPRKVKYRKKQRG). The segment at 1–20 (MLSPRKVKYRKKQRGRLSGE) is disordered.

It belongs to the universal ribosomal protein uL16 family. In terms of assembly, part of the 50S ribosomal subunit.

Binds 23S rRNA and is also seen to make contacts with the A and possibly P site tRNAs. The polypeptide is Large ribosomal subunit protein uL16 (Borrelia turicatae (strain 91E135)).